The following is a 397-amino-acid chain: Elongation factor Tu (397 aa).

The region spanning 10 to 207 is the tr-type G domain; sequence KPHVNVGTIG…TLDSYIPEPV (198 aa). Positions 19-26 are G1; sequence GHVDHGKT. 19 to 26 provides a ligand contact to GTP; it reads GHVDHGKT. Thr26 serves as a coordination point for Mg(2+). The segment at 60–64 is G2; sequence GITIN. Tyr77 is subject to Phosphotyrosine. The interval 81–84 is G3; it reads DCPG. 81-85 contributes to the GTP binding site; it reads DCPGH. Tyr88 is modified (phosphotyrosine). 136-139 is a GTP binding site; sequence NKAD. Residues 136–139 form a G4 region; sequence NKAD. Positions 174–176 are G5; that stretch reads SAL.

The protein belongs to the TRAFAC class translation factor GTPase superfamily. Classic translation factor GTPase family. EF-Tu/EF-1A subfamily. In terms of assembly, monomer.

It localises to the cytoplasm. It carries out the reaction GTP + H2O = GDP + phosphate + H(+). GTP hydrolase that promotes the GTP-dependent binding of aminoacyl-tRNA to the A-site of ribosomes during protein biosynthesis. The polypeptide is Elongation factor Tu (Pseudomonas aeruginosa (strain UCBPP-PA14)).